Reading from the N-terminus, the 641-residue chain is Chaperone protein DnaK (641 aa).

Threonine 199 is subject to Phosphothreonine; by autocatalysis. Basic and acidic residues predominate over residues 577 to 590; it reads KGDNKDEIETRTQK. The disordered stretch occupies residues 577–641; sequence KGDNKDEIET…EFEEVDDKKK (65 aa). The span at 617–626 shows a compositional bias: low complexity; the sequence is GAEQASAQQD. Residues 627 to 641 show a composition bias toward acidic residues; the sequence is DVVDAEFEEVDDKKK.

Belongs to the heat shock protein 70 family.

Acts as a chaperone. The sequence is that of Chaperone protein DnaK from Thioalkalivibrio sulfidiphilus (strain HL-EbGR7).